Here is a 157-residue protein sequence, read N- to C-terminus: SsrA-binding protein (157 aa).

Basic and acidic residues predominate over residues Ala-138–Arg-151. Residues Ala-138–Ser-157 form a disordered region.

It belongs to the SmpB family.

Its subcellular location is the cytoplasm. In terms of biological role, required for rescue of stalled ribosomes mediated by trans-translation. Binds to transfer-messenger RNA (tmRNA), required for stable association of tmRNA with ribosomes. tmRNA and SmpB together mimic tRNA shape, replacing the anticodon stem-loop with SmpB. tmRNA is encoded by the ssrA gene; the 2 termini fold to resemble tRNA(Ala) and it encodes a 'tag peptide', a short internal open reading frame. During trans-translation Ala-aminoacylated tmRNA acts like a tRNA, entering the A-site of stalled ribosomes, displacing the stalled mRNA. The ribosome then switches to translate the ORF on the tmRNA; the nascent peptide is terminated with the 'tag peptide' encoded by the tmRNA and targeted for degradation. The ribosome is freed to recommence translation, which seems to be the essential function of trans-translation. The polypeptide is SsrA-binding protein (Cereibacter sphaeroides (strain ATCC 17025 / ATH 2.4.3) (Rhodobacter sphaeroides)).